The chain runs to 183 residues: Ubiquitin-conjugating enzyme E2-21 kDa (183 aa).

Residues 17 to 179 (TCMSRIVKEY…VKYFLAERER (163 aa)) form the UBC core domain. The Glycyl thioester intermediate role is filled by C115.

Belongs to the ubiquitin-conjugating enzyme family.

The protein resides in the peroxisome. The catalysed reaction is S-ubiquitinyl-[E1 ubiquitin-activating enzyme]-L-cysteine + [E2 ubiquitin-conjugating enzyme]-L-cysteine = [E1 ubiquitin-activating enzyme]-L-cysteine + S-ubiquitinyl-[E2 ubiquitin-conjugating enzyme]-L-cysteine.. It functions in the pathway protein modification; protein ubiquitination. In terms of biological role, catalyzes the covalent attachment of ubiquitin to other proteins. Essential for peroxisome biogenesis. Required for UBC4-independent ubiquitination of PEX5. The polypeptide is Ubiquitin-conjugating enzyme E2-21 kDa (PEX4) (Saccharomyces cerevisiae (strain ATCC 204508 / S288c) (Baker's yeast)).